A 424-amino-acid chain; its full sequence is 3-ketoacyl-CoA thiolase B, peroxisomal (424 aa).

The transit peptide at 1 to 26 (MHRLQVVLGHLAGRPESSSALQAAPC) directs the protein to the peroxisome. Positions 1-26 (MHRLQVVLGHLAGRPESSSALQAAPC) are PTS2-type peroxisomal targeting signal. Catalysis depends on C123, which acts as the Acyl-thioester intermediate. Residues K173 and K234 each carry the N6-acetyllysine modification. Residues R249, T252, and S276 each contribute to the CoA site. Catalysis depends on C408, which acts as the Proton donor/acceptor.

The protein belongs to the thiolase-like superfamily. Thiolase family. As to quaternary structure, homodimer. Interacts (via PTS2-type peroxisomal targeting signal region) with PEX7; leading to its translocation into peroxisomes. Mainly expressed in liver; weaker levels in kidney, intestine and white adipose tissue.

It localises to the peroxisome. The enzyme catalyses an acyl-CoA + acetyl-CoA = a 3-oxoacyl-CoA + CoA. It carries out the reaction 2 acetyl-CoA = acetoacetyl-CoA + CoA. The catalysed reaction is hexanoyl-CoA + acetyl-CoA = 3-oxooctanoyl-CoA + CoA. It catalyses the reaction tetradecanoyl-CoA + acetyl-CoA = 3-oxohexadecanoyl-CoA + CoA. The enzyme catalyses 3-oxohexadecanedioyl-CoA + CoA = tetradecanedioyl-CoA + acetyl-CoA. It carries out the reaction 3-oxo-(6Z,9Z,12Z,15Z,18Z,21Z)-tetracosahexaenoyl-CoA + CoA = (4Z,7Z,10Z,13Z,16Z,19Z)-docosahexaenoyl-CoA + acetyl-CoA. It participates in lipid metabolism; peroxisomal fatty acid beta-oxidation. Functionally, responsible for the thiolytic cleavage of straight chain 3-keto fatty acyl-CoAs (3-oxoacyl-CoAs). Plays an important role in fatty acid peroxisomal beta-oxidation. Catalyzes the cleavage of short, medium, long, and very long straight chain 3-oxoacyl-CoAs. In Mus musculus (Mouse), this protein is 3-ketoacyl-CoA thiolase B, peroxisomal.